Consider the following 136-residue polypeptide: Small ribosomal subunit protein uS8c (136 aa).

The protein belongs to the universal ribosomal protein uS8 family. Part of the 30S ribosomal subunit.

The protein resides in the plastid. In terms of biological role, one of the primary rRNA binding proteins, it binds directly to 16S rRNA central domain where it helps coordinate assembly of the platform of the 30S subunit. This is Small ribosomal subunit protein uS8c (rps8) from Helicosporidium sp. subsp. Simulium jonesii (Green alga).